A 466-amino-acid polypeptide reads, in one-letter code: MTDETLKNQMWGGRFIAGPAAVMEEINASIDVDQKLYRQDIEGSLSHAAMLAQTKIILQSDYEKISHGLKIILQEIEEGDFVFSRNLEDIHMNIEARLSALIGPVAGRLHTARSRNDQVAVDFRLWVRETLQKIAQALKQLIKQLLILAEQHVKTYMPGFTHLQLAQPVTLGHYMMAYVEMFGRDLSRMRDASERMNESPLGAAALAGTSFPIDRFMTAQALGFREPTRNSIDSVSDRDFALEFLSAGALCAMHLSRLAEEIILWSSEQFRFIYLSDAFSTGSSIMPQKRNPDAAELVRAKTGRLNGALMGLLTVMKGLPLAYSKDMQEDKEYVFDGALSLELSLAAMTGMIADLEVNKKAMKQAADLGYATATDFADWLVRELGIPFREAHHMTGQAMALAEKKQCRLQDLSLDELQAICPDINATLFDVLTVEKSVESRKSFGGTASSEVLRQIAYWKKRLVSA.

Belongs to the lyase 1 family. Argininosuccinate lyase subfamily.

The protein localises to the cytoplasm. The enzyme catalyses 2-(N(omega)-L-arginino)succinate = fumarate + L-arginine. It participates in amino-acid biosynthesis; L-arginine biosynthesis; L-arginine from L-ornithine and carbamoyl phosphate: step 3/3. In Bartonella tribocorum (strain CIP 105476 / IBS 506), this protein is Argininosuccinate lyase.